The sequence spans 299 residues: GTPase Era (299 aa).

Positions 5-175 (RSGFVCFVGR…TDVLAGKLPP (171 aa)) constitute an Era-type G domain. The tract at residues 13-20 (GRPNTGKS) is G1. Residue 13–20 (GRPNTGKS) coordinates GTP. The interval 39-43 (QTTRH) is G2. The segment at 60 to 63 (DTPG) is G3. Residues 60 to 64 (DTPGL) and 124 to 127 (TKID) contribute to the GTP site. Positions 124-127 (TKID) are G4. The interval 154 to 156 (VSA) is G5. The KH type-2 domain occupies 206-285 (VRDELPHSLA…YLDLRVKIAK (80 aa)).

This sequence belongs to the TRAFAC class TrmE-Era-EngA-EngB-Septin-like GTPase superfamily. Era GTPase family. As to quaternary structure, monomer.

It is found in the cell envelope. It localises to the secreted. The protein resides in the cell wall. Its function is as follows. Exhibits GTPase activity. Binds RNA but is probably not involved in ribosome assembly in mycobacteria. This Mycobacterium sp. (strain KMS) protein is GTPase Era.